We begin with the raw amino-acid sequence, 281 residues long: Bis(5'-nucleosyl)-tetraphosphatase, symmetrical (281 aa).

It belongs to the Ap4A hydrolase family.

The enzyme catalyses P(1),P(4)-bis(5'-adenosyl) tetraphosphate + H2O = 2 ADP + 2 H(+). Hydrolyzes diadenosine 5',5'''-P1,P4-tetraphosphate to yield ADP. The polypeptide is Bis(5'-nucleosyl)-tetraphosphatase, symmetrical (Pectobacterium atrosepticum (strain SCRI 1043 / ATCC BAA-672) (Erwinia carotovora subsp. atroseptica)).